Reading from the N-terminus, the 323-residue chain is Lipoyl synthase (323 aa).

[4Fe-4S] cluster-binding residues include Cys61, Cys66, Cys72, Cys87, Cys91, Cys94, and Ser303. In terms of domain architecture, Radical SAM core spans 73-292 (WTKKTATFLV…EQYGLSIGIP (220 aa)).

The protein belongs to the radical SAM superfamily. Lipoyl synthase family. [4Fe-4S] cluster serves as cofactor.

The protein resides in the cytoplasm. It carries out the reaction [[Fe-S] cluster scaffold protein carrying a second [4Fe-4S](2+) cluster] + N(6)-octanoyl-L-lysyl-[protein] + 2 oxidized [2Fe-2S]-[ferredoxin] + 2 S-adenosyl-L-methionine + 4 H(+) = [[Fe-S] cluster scaffold protein] + N(6)-[(R)-dihydrolipoyl]-L-lysyl-[protein] + 4 Fe(3+) + 2 hydrogen sulfide + 2 5'-deoxyadenosine + 2 L-methionine + 2 reduced [2Fe-2S]-[ferredoxin]. The protein operates within protein modification; protein lipoylation via endogenous pathway; protein N(6)-(lipoyl)lysine from octanoyl-[acyl-carrier-protein]: step 2/2. Catalyzes the radical-mediated insertion of two sulfur atoms into the C-6 and C-8 positions of the octanoyl moiety bound to the lipoyl domains of lipoate-dependent enzymes, thereby converting the octanoylated domains into lipoylated derivatives. This Protochlamydia amoebophila (strain UWE25) protein is Lipoyl synthase.